The primary structure comprises 99 residues: MALTLTDVKRIAHLARLEMADADAEHMLGQLNEFFGLVEQMQAVDTAGIAPLAHPIEQIQEVAQRLRDDAVTEVVNRDDNQRPAPAVQDGLYLVPKVIE.

This sequence belongs to the GatC family. In terms of assembly, heterotrimer of A, B and C subunits.

The enzyme catalyses L-glutamyl-tRNA(Gln) + L-glutamine + ATP + H2O = L-glutaminyl-tRNA(Gln) + L-glutamate + ADP + phosphate + H(+). The catalysed reaction is L-aspartyl-tRNA(Asn) + L-glutamine + ATP + H2O = L-asparaginyl-tRNA(Asn) + L-glutamate + ADP + phosphate + 2 H(+). Functionally, allows the formation of correctly charged Asn-tRNA(Asn) or Gln-tRNA(Gln) through the transamidation of misacylated Asp-tRNA(Asn) or Glu-tRNA(Gln) in organisms which lack either or both of asparaginyl-tRNA or glutaminyl-tRNA synthetases. The reaction takes place in the presence of glutamine and ATP through an activated phospho-Asp-tRNA(Asn) or phospho-Glu-tRNA(Gln). The sequence is that of Aspartyl/glutamyl-tRNA(Asn/Gln) amidotransferase subunit C from Burkholderia ambifaria (strain MC40-6).